The primary structure comprises 160 residues: Large ribosomal subunit protein uL11 (160 aa).

It belongs to the universal ribosomal protein uL11 family. In terms of assembly, part of the ribosomal stalk of the 50S ribosomal subunit. Interacts with L10 and the large rRNA to form the base of the stalk. L10 forms an elongated spine to which L12 dimers bind in a sequential fashion forming a multimeric L10(L12)X complex.

In terms of biological role, forms part of the ribosomal stalk which helps the ribosome interact with GTP-bound translation factors. The chain is Large ribosomal subunit protein uL11 from Methanothermobacter thermautotrophicus (strain ATCC 29096 / DSM 1053 / JCM 10044 / NBRC 100330 / Delta H) (Methanobacterium thermoautotrophicum).